Reading from the N-terminus, the 378-residue chain is Chlorophyll synthase, chloroplastic (378 aa).

Residues 1 to 45 constitute a chloroplast transit peptide; the sequence is MATSHPLAAAAATSSSSATFRPPLRFLSSPPSSLTLNRRRSFPVV. Transmembrane regions (helical) follow at residues 173 to 193, 199 to 219, 232 to 252, 257 to 277, 302 to 322, 327 to 347, and 357 to 377; these read VITQ…LLDI, FPII…YSAP, FALG…LFGT, IVVL…VNDF, WICV…LLST, YALA…QYFL, and YQAS…LATS.

The protein belongs to the UbiA prenyltransferase family. Chlorophyll synthase subfamily. Requires Mg(2+) as cofactor. The cofactor is Zn(2+). Mn(2+) serves as cofactor.

Its subcellular location is the plastid. The protein resides in the chloroplast membrane. It carries out the reaction phytyl diphosphate + chlorophyllide a + H(+) = chlorophyll a + diphosphate. With respect to regulation, inhibited by N-phenylmaleimide (NPM) and diacetyl. Involved in one of the last steps of the biosynthesis of chlorophyll a. Catalyzes the esterification of chlorophillide a with either geranylgeranyldiphosphate (GGPP) or phytyldiphosphate (PhyPP). May also use with a lower efficiency the monophosphates GGMP and PhyMP, but not the non-phosphorylated alcohols geranylgeraniol and phytol. The tetraprenyl diphosphate must bind to the enzyme as the first substrate and esterification occurs when this pre-loaded enzyme meets the second substrate, chlorophyllide. This is Chlorophyll synthase, chloroplastic (CHLG) from Avena sativa (Oat).